The sequence spans 235 residues: MVCALHAVPAHHRRVVTPAGDDPSGPAGSGDRAVAAAAERAKLTAGRNIPSFDDLPLPADTANLREGANLSDALLALLPLVGVWRGEGEGRGHDGDYRFGQQIVVSHDGGDYLNWEARSWRLNDTGDYQERGLRETGFWRFVRDPDDPSESQAIELLLAHSAGYVELFYGRPRTQSSWELVTDALARSRSGVLVGGAKRLYGIVEGGDLAYVEERVDADGGLVPHLSARLSRFAG.

The short motif at 82–88 (GVWRGEG) is the GXWXGXG element. Residues Lys198 and His225 each coordinate heme b.

Belongs to the nitrobindin family. In terms of assembly, homodimer. Heme b serves as cofactor.

It carries out the reaction peroxynitrite = nitrate. The protein operates within nitrogen metabolism. In terms of biological role, heme-binding protein able to scavenge peroxynitrite and to protect free L-tyrosine against peroxynitrite-mediated nitration, by acting as a peroxynitrite isomerase that converts peroxynitrite to nitrate. Therefore, this protein likely plays a role in peroxynitrite sensing and in the detoxification of reactive nitrogen and oxygen species (RNS and ROS, respectively). Is able to bind nitric oxide (NO) in vitro, but may act as a sensor of peroxynitrite levels in vivo. In Mycolicibacterium paratuberculosis (strain ATCC BAA-968 / K-10) (Mycobacterium paratuberculosis), this protein is Peroxynitrite isomerase 2.